The sequence spans 215 residues: Heart- and neural crest derivatives-expressed protein 1 (215 aa).

Disordered stretches follow at residues 53 to 109 (APDF…RTES) and 169 to 202 (VDGGRESKRKRELQQHEGFPPALGPGEKRIKGRT). Over residues 65-75 (AAAAAATYGPD) the composition is skewed to low complexity. The span at 92-104 (LGRRKGSGPKKER) shows a compositional bias: basic residues. The bHLH domain occupies 94–146 (RRKGSGPKKERRRTESINSAFAELRECIPNVPADTKLSKIKTLRLATSYIAYL). Thr107 carries the phosphothreonine; by PLK4 modification. Ser109 carries the phosphoserine; by PLK4 modification.

Efficient DNA binding requires dimerization with another bHLH protein. Forms homodimers and heterodimers with TCF3 gene products E12 and E47, HAND2 and HEY1, HEY2 and HEYL (hairy-related transcription factors). Interacts with MDFIC. Interacts with SOX15; the interaction enhances HAND1-induced differentiation of trophoblast giant cells. In terms of processing, phosphorylation by PLK4 disrupts the interaction with MDFIC and leads to translocation into the nucleoplasm, allowing dimerization and transcription factor activity.

The protein localises to the nucleus. The protein resides in the nucleoplasm. Its subcellular location is the nucleolus. Transcription factor that plays an essential role in both trophoblast giant cell differentiation and in cardiac morphogenesis. Binds the DNA sequence 5'-NRTCTG-3' (non-canonical E-box). Acts as a transcriptional repressor of SOX15. In the adult, could be required for ongoing expression of cardiac-specific genes. This is Heart- and neural crest derivatives-expressed protein 1 (HAND1) from Oryctolagus cuniculus (Rabbit).